Reading from the N-terminus, the 224-residue chain is UPF0758 protein Patl_0046 (224 aa).

Positions 102–224 (VFNSAQQTKH…AVSFAERGLI (123 aa)) constitute an MPN domain. The Zn(2+) site is built by histidine 173, histidine 175, and aspartate 186. Positions 173 to 186 (HNHPSGVAEPSQAD) match the JAMM motif motif.

The protein belongs to the UPF0758 family.

This is UPF0758 protein Patl_0046 from Pseudoalteromonas atlantica (strain T6c / ATCC BAA-1087).